Consider the following 770-residue polypeptide: Penicillin-binding protein 1C (770 aa).

Topologically, residues 1–8 are cytoplasmic; sequence MPRLLTKR. The chain crosses the membrane as a helical; Signal-anchor for type II membrane protein span at residues 9 to 29; it reads GCWITLAAAPFLLFLAAWGAD. Residues 30–770 lie on the Periplasmic side of the membrane; it reads KLWPLPLHEV…QIATVKFVMQ (741 aa). A transglycosylase region spans residues 43–213; that stretch reads RVVVAQDGTP…SRLRPDRWPE (171 aa). Glu-84 functions as the Proton donor; for transglycosylase activity in the catalytic mechanism. The tract at residues 278 to 559 is transpeptidase; sequence AGLQRRLEEL…FASAVPLLNQ (282 aa). Ser-342 acts as the Acyl-ester intermediate; for transpeptidase activity in catalysis.

It in the N-terminal section; belongs to the glycosyltransferase 51 family. In the C-terminal section; belongs to the transpeptidase family.

The protein localises to the cell inner membrane. The enzyme catalyses [GlcNAc-(1-&gt;4)-Mur2Ac(oyl-L-Ala-gamma-D-Glu-L-Lys-D-Ala-D-Ala)](n)-di-trans,octa-cis-undecaprenyl diphosphate + beta-D-GlcNAc-(1-&gt;4)-Mur2Ac(oyl-L-Ala-gamma-D-Glu-L-Lys-D-Ala-D-Ala)-di-trans,octa-cis-undecaprenyl diphosphate = [GlcNAc-(1-&gt;4)-Mur2Ac(oyl-L-Ala-gamma-D-Glu-L-Lys-D-Ala-D-Ala)](n+1)-di-trans,octa-cis-undecaprenyl diphosphate + di-trans,octa-cis-undecaprenyl diphosphate + H(+). It participates in cell wall biogenesis; peptidoglycan biosynthesis. With respect to regulation, transglycosylase activity can be inhibited by moenomycin. Its function is as follows. Cell wall formation. The enzyme has a penicillin-insensitive transglycosylase N-terminal domain (formation of linear glycan strands) and a transpeptidase C-terminal domain which may not be functional. This is Penicillin-binding protein 1C (pbpC) from Escherichia coli (strain K12).